The primary structure comprises 458 residues: Ammonium transporter Rh type B (458 aa).

The Cytoplasmic portion of the chain corresponds to 1-13 (MAGSPSRAAGRRL). A helical transmembrane segment spans residues 14–34 (QLPLLCLFLQGATAVLFAVFV). At 35–61 (RYNHKTDAALWHRSNHSNADNEFYFRY) the chain is on the extracellular side. Asparagine 49 is a glycosylation site (N-linked (GlcNAc...) asparagine). Residues 62-82 (PSFQDVHAMVFVGFGFLMVFL) form a helical membrane-spanning segment. At 83–86 (QRYG) the chain is on the cytoplasmic side. A helical transmembrane segment spans residues 87-107 (FSSVGFTFLLAAFALQWSTLV). Residues 108–124 (QGFLHSFHGGHIHVGVE) are Extracellular-facing. Residues 125 to 145 (SMINADFCAGAVLISFGAVLG) traverse the membrane as a helical segment. The Cytoplasmic segment spans residues 146–149 (KTGP). Residues 150–170 (TQLLLMALLEVVLFGINEFVL) traverse the membrane as a helical segment. Residues 171–178 (LHLLGVRD) are Extracellular-facing. A helical transmembrane segment spans residues 179–201 (AGGSMTIHTFGAYFGLVLSRVLY). At 202–219 (RPQLEKSKHRQGSVYHSD) the chain is on the cytoplasmic side. Residues 220-240 (LFAMIGTIFLWIFWPSFNAAL) traverse the membrane as a helical segment. The Extracellular portion of the chain corresponds to 241 to 251 (TALGAGQHRTA). The chain crosses the membrane as a helical span at residues 252 to 272 (LNTYYSLAASTLGTFALSALV). The Cytoplasmic portion of the chain corresponds to 273–282 (GEDGRLDMVH). The helical transmembrane segment at 283–303 (IQNAALAGGVVVGTSSEMMLT) threads the bilayer. Residue proline 304 is a topological domain, extracellular. A helical transmembrane segment spans residues 305–325 (FGALAAGFLAGTVSTLGYKFF). At 326 to 346 (TPILESKFKVQDTCGVHNLHG) the chain is on the cytoplasmic side. The helical transmembrane segment at 347–367 (MPGVLGALLGVLVAGLATHEA) threads the bilayer. The Extracellular portion of the chain corresponds to 368-393 (YGDGLESVFPLIAEGQRSATSQAMHQ). Residues 394 to 414 (LFGLFVTLMFASVGGGLGGLL) traverse the membrane as a helical segment. Over 415-458 (LKLPFLDSPPDSQHYEDQVHWQVPGEHEDKAQRPLRVEEADTQA) the chain is Cytoplasmic. The interval 416 to 424 (KLPFLDSPP) is interaction with ANK3. Residues 436–458 (QVPGEHEDKAQRPLRVEEADTQA) are disordered.

It belongs to the ammonium transporter (TC 2.A.49) family. Rh subfamily. Interacts (via C-terminus) with ANK2 and ANK3; required for targeting to the basolateral membrane. N-glycosylated. In terms of tissue distribution, specifically expressed in kidney. Also detected in liver and ovary.

The protein resides in the cell membrane. The protein localises to the basolateral cell membrane. It carries out the reaction NH4(+)(in) = NH4(+)(out). It catalyses the reaction methylamine(out) = methylamine(in). The enzyme catalyses CO2(out) = CO2(in). Its function is as follows. Ammonium transporter involved in the maintenance of acid-base homeostasis. Transports ammonium and its related derivative methylammonium across the basolateral plasma membrane of epithelial cells likely contributing to renal transepithelial ammonia transport and ammonia metabolism. May transport either NH4(+) or NH3 ammonia species predominantly mediating an electrogenic NH4(+) transport. May act as a CO2 channel providing for renal acid secretion. The polypeptide is Ammonium transporter Rh type B (Homo sapiens (Human)).